The primary structure comprises 311 residues: Probable manganese-dependent inorganic pyrophosphatase (311 aa).

6 residues coordinate Mn(2+): His9, Asp13, Asp15, Asp77, His99, and Asp151.

It belongs to the PPase class C family. As to quaternary structure, homodimer. Mn(2+) serves as cofactor.

The protein resides in the cytoplasm. The catalysed reaction is diphosphate + H2O = 2 phosphate + H(+). The protein is Probable manganese-dependent inorganic pyrophosphatase (ppaC) of Streptococcus gordonii (strain Challis / ATCC 35105 / BCRC 15272 / CH1 / DL1 / V288).